The following is a 645-amino-acid chain: Acetyl-coenzyme A synthetase (645 aa).

CoA-binding positions include 190-193, T308, and N332; that span reads RGSK. ATP-binding positions include 384 to 386, 408 to 413, D497, and R512; these read GEP and DTWWQT. A CoA-binding site is contributed by S520. R523 provides a ligand contact to ATP. Mg(2+)-binding residues include V534, H536, and V539. CoA is bound at residue R581. At K606 the chain carries N6-acetyllysine.

The protein belongs to the ATP-dependent AMP-binding enzyme family. Mg(2+) serves as cofactor. Post-translationally, acetylated. Deacetylation by the SIR2-homolog deacetylase activates the enzyme.

It catalyses the reaction acetate + ATP + CoA = acetyl-CoA + AMP + diphosphate. Functionally, catalyzes the conversion of acetate into acetyl-CoA (AcCoA), an essential intermediate at the junction of anabolic and catabolic pathways. AcsA undergoes a two-step reaction. In the first half reaction, AcsA combines acetate with ATP to form acetyl-adenylate (AcAMP) intermediate. In the second half reaction, it can then transfer the acetyl group from AcAMP to the sulfhydryl group of CoA, forming the product AcCoA. In Bdellovibrio bacteriovorus (strain ATCC 15356 / DSM 50701 / NCIMB 9529 / HD100), this protein is Acetyl-coenzyme A synthetase.